A 256-amino-acid polypeptide reads, in one-letter code: Rhamnolipids biosynthesis 3-oxoacyl-[acyl-carrier-protein] reductase (256 aa).

An NADP(+)-binding site is contributed by 14–38 (VTGGSRGIGQMIAQGLLEAGARVFI). S148 is a substrate binding site. Catalysis depends on Y162, which acts as the Proton acceptor.

This sequence belongs to the short-chain dehydrogenases/reductases (SDR) family.

It carries out the reaction a (3R)-hydroxyacyl-[ACP] + NADP(+) = a 3-oxoacyl-[ACP] + NADPH + H(+). It functions in the pathway lipid metabolism; rhamnolipid biosynthesis. In terms of biological role, required for the synthesis of the beta-hydroxy acid moiety of rhamnolipids. The protein is Rhamnolipids biosynthesis 3-oxoacyl-[acyl-carrier-protein] reductase (rhlG) of Pseudomonas aeruginosa (strain ATCC 15692 / DSM 22644 / CIP 104116 / JCM 14847 / LMG 12228 / 1C / PRS 101 / PAO1).